Here is a 219-residue protein sequence, read N- to C-terminus: Probable nicotinate-nucleotide adenylyltransferase (219 aa).

It belongs to the NadD family.

The catalysed reaction is nicotinate beta-D-ribonucleotide + ATP + H(+) = deamido-NAD(+) + diphosphate. It functions in the pathway cofactor biosynthesis; NAD(+) biosynthesis; deamido-NAD(+) from nicotinate D-ribonucleotide: step 1/1. Its function is as follows. Catalyzes the reversible adenylation of nicotinate mononucleotide (NaMN) to nicotinic acid adenine dinucleotide (NaAD). The chain is Probable nicotinate-nucleotide adenylyltransferase from Hahella chejuensis (strain KCTC 2396).